The sequence spans 432 residues: Trigger factor (432 aa).

The 86-residue stretch at 161 to 246 (GTRATINFVG…VVKVEARELP (86 aa)) folds into the PPIase FKBP-type domain.

This sequence belongs to the FKBP-type PPIase family. Tig subfamily.

The protein localises to the cytoplasm. The catalysed reaction is [protein]-peptidylproline (omega=180) = [protein]-peptidylproline (omega=0). Its function is as follows. Involved in protein export. Acts as a chaperone by maintaining the newly synthesized protein in an open conformation. Functions as a peptidyl-prolyl cis-trans isomerase. The sequence is that of Trigger factor from Aliivibrio salmonicida (strain LFI1238) (Vibrio salmonicida (strain LFI1238)).